The following is a 196-amino-acid chain: Proteasome subunit beta 1 (196 aa).

Residues 1–6 (MEELPA) constitute a propeptide, removed in mature form; by autocatalysis. The Nucleophile role is filled by Thr-7.

It belongs to the peptidase T1B family. As to quaternary structure, the 20S proteasome core is composed of 14 alpha and 14 beta subunits that assemble into four stacked heptameric rings, resulting in a barrel-shaped structure. The two inner rings, each composed of seven catalytic beta subunits, are sandwiched by two outer rings, each composed of seven alpha subunits. The catalytic chamber with the active sites is on the inside of the barrel. Has a gated structure, the ends of the cylinder being occluded by the N-termini of the alpha-subunits. Is capped at one or both ends by the proteasome regulatory ATPase, PAN.

It is found in the cytoplasm. It catalyses the reaction Cleavage of peptide bonds with very broad specificity.. The formation of the proteasomal ATPase PAN-20S proteasome complex, via the docking of the C-termini of PAN into the intersubunit pockets in the alpha-rings, triggers opening of the gate for substrate entry. Interconversion between the open-gate and close-gate conformations leads to a dynamic regulation of the 20S proteasome proteolysis activity. Functionally, component of the proteasome core, a large protease complex with broad specificity involved in protein degradation. This is Proteasome subunit beta 1 from Saccharolobus solfataricus (strain ATCC 35092 / DSM 1617 / JCM 11322 / P2) (Sulfolobus solfataricus).